We begin with the raw amino-acid sequence, 787 residues long: Protein FAM149A (787 aa).

Disordered regions lie at residues 22–105, 144–175, 189–226, 238–284, 432–455, 573–602, and 665–697; these read SPAV…SSGA, GSNS…APGP, EEWT…PTNF, ASES…SWRD, DGDE…GLPP, LQQR…ASSR, and AVQT…SYRG. The segment covering 37–46 has biased composition (polar residues); sequence SVDSGASTSL. Low complexity-rich tracts occupy residues 51–65 and 96–105; these read TLTL…TAAS and SGSLPSSSGA. Residues 144–155 are compositionally biased toward polar residues; the sequence is GSNSVTASSPRN. Over residues 189–200 the composition is skewed to acidic residues; it reads EEWTSDSDSQDD. Basic and acidic residues predominate over residues 201–220; that stretch reads PEGRGLSEGLRKQSSEKSKD. Residues 239–250 are compositionally biased toward low complexity; that stretch reads SESPSSFSSSGS. Residues 251-261 are compositionally biased toward polar residues; it reads RTPTEAHNSWP. The segment covering 262–274 has biased composition (low complexity); that stretch reads GSSTQSSTTGLST.

Belongs to the FAM149 family.

This is Protein FAM149A (Fam149a) from Mus musculus (Mouse).